We begin with the raw amino-acid sequence, 109 residues long: Parvalbumin beta (109 aa).

Ala2 carries the post-translational modification N-acetylalanine. 2 consecutive EF-hand domains span residues 39–74 (KSAD…FKAG) and 78–109 (LSDA…MIKG). 11 residues coordinate Ca(2+): Asp52, Asp54, Ser56, Tyr58, Glu60, Glu63, Asp91, Asp93, Asp95, Lys97, and Glu102.

It belongs to the parvalbumin family. The N-terminus is blocked.

In terms of biological role, in muscle, parvalbumin is thought to be involved in relaxation after contraction. It binds two calcium ions. This Scomber scombrus (Atlantic mackerel) protein is Parvalbumin beta.